The following is a 238-amino-acid chain: Ubiquinone biosynthesis O-methyltransferase (238 aa).

The S-adenosyl-L-methionine site is built by Arg38, Gly58, Asp79, and Met124.

It belongs to the methyltransferase superfamily. UbiG/COQ3 family.

The catalysed reaction is a 3-demethylubiquinol + S-adenosyl-L-methionine = a ubiquinol + S-adenosyl-L-homocysteine + H(+). The enzyme catalyses a 3-(all-trans-polyprenyl)benzene-1,2-diol + S-adenosyl-L-methionine = a 2-methoxy-6-(all-trans-polyprenyl)phenol + S-adenosyl-L-homocysteine + H(+). It participates in cofactor biosynthesis; ubiquinone biosynthesis. O-methyltransferase that catalyzes the 2 O-methylation steps in the ubiquinone biosynthetic pathway. The protein is Ubiquinone biosynthesis O-methyltransferase of Acinetobacter baylyi (strain ATCC 33305 / BD413 / ADP1).